We begin with the raw amino-acid sequence, 470 residues long: uncharacterized protein (470 aa).

The signal sequence occupies residues 1-24 (MKKLVGSLAAISVLSATGFSYVGY).

This is an uncharacterized protein from Mycoplasma capricolum subsp. capricolum (strain California kid / ATCC 27343 / NCTC 10154).